Reading from the N-terminus, the 331-residue chain is Putative heme-binding peroxidase (331 aa).

His50 acts as the Proton acceptor in catalysis. Residue His174 coordinates heme b. Trp190 (tryptophan radical intermediate) is an active-site residue. The segment at 288 to 331 (INTDNQKGGYRSAPKKSDSTPATSGQPGASKTGGCPVMHHKAKL) is disordered. A compositionally biased stretch (polar residues) spans 306-316 (STPATSGQPGA).

The protein belongs to the peroxidase family. Cytochrome c peroxidase subfamily. Heme b is required as a cofactor.

Functionally, destroys radicals which are normally produced within the cells and which are toxic to biological systems. The polypeptide is Putative heme-binding peroxidase (Gibberella zeae (strain ATCC MYA-4620 / CBS 123657 / FGSC 9075 / NRRL 31084 / PH-1) (Wheat head blight fungus)).